Consider the following 427-residue polypeptide: NADPH-dependent stearoyl-CoA 9-desaturase (427 aa).

Fe cation is bound by residues histidine 90, histidine 94, histidine 125, histidine 129, histidine 130, histidine 304, histidine 308, and histidine 309.

The protein belongs to the fatty acid desaturase type 1 family. As to quaternary structure, interacts with the electron transfer protein Rv3230c to form a functional acyl-CoA desaturase complex. Fe(2+) is required as a cofactor. Post-translationally, is rapidly degraded by a mycobacterial protein degradation system that specifically targets the residues LAA at the C-terminus, leading to a post-translational proteolytic regulation of DesA3 essential activity.

It is found in the cell membrane. The catalysed reaction is octadecanoyl-CoA + NADPH + O2 + H(+) = (9Z)-octadecenoyl-CoA + NADP(+) + 2 H2O. It participates in lipid metabolism; fatty acid metabolism. Is likely involved in the aerobic desaturation system responsible for the synthesis of oleic acid from stearoyl-CoA; oleic acid is a precursor of mycobacterial membrane phospholipids and triglycerides. Catalyzes the conversion of stearoyl-CoA to oleoyl-CoA by introduction of a cis double bond between carbons 9 and 10 of the acyl chain. Requires the electron transfer partner Rv3230c to pass two electrons from NADPH to its active site diiron center. Is also able to catalyze the 9-desaturation of palmitoyl-CoA to palmitoleoyl-CoA. This chain is NADPH-dependent stearoyl-CoA 9-desaturase (desA3), found in Mycobacterium tuberculosis (strain CDC 1551 / Oshkosh).